The primary structure comprises 216 residues: CRIB domain-containing protein RIC7 (216 aa).

The region spanning 36 to 49 (IGNPTDVKHVAHIG) is the CRIB domain. Residues 52–216 (GPSDNATAPS…PQFEDDRNGF (165 aa)) form a disordered region. The segment covering 108–121 (SSSEKGSPTKERSD) has biased composition (basic and acidic residues).

As to quaternary structure, interacts with ARAC4/ROP2 and ARAC11/ROP1. In terms of tissue distribution, expressed in roots, leaves, guard cells, stems, flowers, siliques and pollen.

Its subcellular location is the nucleus. The protein localises to the cytoplasm. It localises to the cell membrane. Functionally, functions as a downstream effector of Rho-related GTP binding proteins of the 'Rho of Plants' (ROPs) family. Participates in the propagation of ROP GTPase signals in specific cellular responses. Functions as a downstream effector of active ARAC4/ROP2 GTPase which is involved in the prevention of excessive stomatal opening upon light stimulation. Is involved in pollen tube growth regulation through its interaction with ARAC11/ROP1. In Arabidopsis thaliana (Mouse-ear cress), this protein is CRIB domain-containing protein RIC7 (RIC7).